Here is a 35-residue protein sequence, read N- to C-terminus: Photosystem II reaction center protein T (35 aa).

A helical membrane pass occupies residues 3–23; it reads ALVYTFLLIGTLGIIFFAIFF.

The protein belongs to the PsbT family. PSII is composed of 1 copy each of membrane proteins PsbA, PsbB, PsbC, PsbD, PsbE, PsbF, PsbH, PsbI, PsbJ, PsbK, PsbL, PsbM, PsbT, PsbY, PsbZ, Psb30/Ycf12, at least 3 peripheral proteins of the oxygen-evolving complex and a large number of cofactors. It forms dimeric complexes.

Its subcellular location is the plastid. The protein localises to the chloroplast thylakoid membrane. Found at the monomer-monomer interface of the photosystem II (PS II) dimer, plays a role in assembly and dimerization of PSII. PSII is a light-driven water plastoquinone oxidoreductase, using light energy to abstract electrons from H(2)O, generating a proton gradient subsequently used for ATP formation. This chain is Photosystem II reaction center protein T, found in Coleochaete orbicularis (Charophycean green alga).